A 299-amino-acid polypeptide reads, in one-letter code: Glycine--tRNA ligase alpha subunit (299 aa).

It belongs to the class-II aminoacyl-tRNA synthetase family. As to quaternary structure, tetramer of two alpha and two beta subunits.

The protein resides in the cytoplasm. The catalysed reaction is tRNA(Gly) + glycine + ATP = glycyl-tRNA(Gly) + AMP + diphosphate. This is Glycine--tRNA ligase alpha subunit from Lactiplantibacillus plantarum (strain ATCC BAA-793 / NCIMB 8826 / WCFS1) (Lactobacillus plantarum).